The chain runs to 201 residues: Small ribosomal subunit protein uS4c (201 aa).

Residues 15–43 form a disordered region; it reads LGALPGLTSKRPTPGSDLRNQSRSGKRSQ. Residues 89–149 form the S4 RNA-binding domain; it reads MRLDNILFRL…DEQKSRALIQ (61 aa).

Belongs to the universal ribosomal protein uS4 family. As to quaternary structure, part of the 30S ribosomal subunit. Contacts protein S5. The interaction surface between S4 and S5 is involved in control of translational fidelity.

It localises to the plastid. The protein resides in the chloroplast. In terms of biological role, one of the primary rRNA binding proteins, it binds directly to 16S rRNA where it nucleates assembly of the body of the 30S subunit. Functionally, with S5 and S12 plays an important role in translational accuracy. The protein is Small ribosomal subunit protein uS4c (rps4) of Nandina domestica (Heavenly bamboo).